The sequence spans 21 residues: Basic phospholipase A2 BjIV (21 aa).

It belongs to the phospholipase A2 family. Group II subfamily. In terms of assembly, can form dimers, trimers and tetramers. Ca(2+) is required as a cofactor. Contains seven disulfide bonds. As to expression, expressed by the venom gland.

The protein resides in the secreted. It carries out the reaction a 1,2-diacyl-sn-glycero-3-phosphocholine + H2O = a 1-acyl-sn-glycero-3-phosphocholine + a fatty acid + H(+). Inhibited by crotapotin. Snake venom phospholipase A2 has a high enzymatic activity and produces moderate myonecrosis in skeletal muscle, but shows no neuromuscular activity in mouse phrenic nerve-diaphragm preparations. PLA2 catalyzes the calcium-dependent hydrolysis of the 2-acyl groups in 3-sn-phosphoglycerides. This Bothrops jararacussu (Jararacussu) protein is Basic phospholipase A2 BjIV.